The following is a 209-amino-acid chain: Uracil phosphoribosyltransferase (209 aa).

5-phospho-alpha-D-ribose 1-diphosphate is bound by residues Arg-79, Arg-104, and 131 to 139 (DPMLATGNS). Uracil contacts are provided by residues Ile-194 and 199–201 (GDA). Residue Asp-200 coordinates 5-phospho-alpha-D-ribose 1-diphosphate.

Belongs to the UPRTase family. The cofactor is Mg(2+).

The enzyme catalyses UMP + diphosphate = 5-phospho-alpha-D-ribose 1-diphosphate + uracil. The protein operates within pyrimidine metabolism; UMP biosynthesis via salvage pathway; UMP from uracil: step 1/1. Its activity is regulated as follows. Allosterically activated by GTP. Its function is as follows. Catalyzes the conversion of uracil and 5-phospho-alpha-D-ribose 1-diphosphate (PRPP) to UMP and diphosphate. This chain is Uracil phosphoribosyltransferase, found in Rhizobium leguminosarum bv. trifolii (strain WSM2304).